The following is a 119-amino-acid chain: uncharacterized protein (119 aa).

2 consecutive transmembrane segments (helical) span residues 7–27 and 32–52; these read ILHN…LLLV and YFFE…FLML.

The protein localises to the membrane. This is an uncharacterized protein from Saccharomyces cerevisiae (strain ATCC 204508 / S288c) (Baker's yeast).